Reading from the N-terminus, the 818-residue chain is Beta-glucosidase (818 aa).

The active site involves Asp-222. In terms of domain architecture, PA14 spans 386–538; it reads VFSGEMTVEY…GDAGIAEAVE (153 aa).

The protein belongs to the glycosyl hydrolase 3 family.

Its subcellular location is the cytoplasm. It carries out the reaction Hydrolysis of terminal, non-reducing beta-D-glucosyl residues with release of beta-D-glucose.. In terms of biological role, involved in modifying a vir-inducing plant signal molecule. Hydrolyzes coniferin but not cellobiose. This Rhizobium radiobacter (Agrobacterium tumefaciens) protein is Beta-glucosidase (cbg-1).